Reading from the N-terminus, the 103-residue chain is MQLYTYLYLLVPLVTFHLILGTGTLDHGGALTERRSTDATALKPEPVLQKSAARSTDDNGKDRLTQMKRILKKRGKNARGDEEYSKFIEREREAGRLDLSKFP.

The N-terminal stretch at 1 to 21 (MQLYTYLYLLVPLVTFHLILG) is a signal peptide. Residues 22 to 79 (TGTLDHGGALTERRSTDATALKPEPVLQKSAARSTDDNGKDRLTQMKRILKKRGKNAR) constitute a propeptide that is removed on maturation. The interval 34 to 64 (RRSTDATALKPEPVLQKSAARSTDDNGKDRL) is disordered. Positions 55-64 (STDDNGKDRL) are enriched in basic and acidic residues. 4 positions are modified to 4-carboxyglutamate: glutamate 82, glutamate 83, glutamate 89, and glutamate 93. Glutamate 89 and glutamate 93 together coordinate a divalent metal cation.

The protein belongs to the conotoxin B superfamily. The cofactor is Ca(2+). Mg(2+) serves as cofactor. Expressed by the venom duct.

Its subcellular location is the secreted. Functionally, conantokins inhibit N-methyl-D-aspartate (NMDA) receptors. This toxin inhibits NR2 subunits N-methyl-D-aspartate (NMDA) receptor-mediated calcium influx in central nervous system neurons in the following order of preference: NR2B/GRIN2B (IC(50)=0.14 uM), NR2D/GRIN2D (IC(50)=0.31 uM), NR2A/GRIN2A (IC(50)=0.68 uM) and NR2C/GRIN2A (IC(50)=4.9 uM), when tested on rat receptors. The sequence is that of Conantokin-Br from Conus sulcatus (Sulcate cone).